The sequence spans 363 residues: Guanine nucleotide-binding protein alpha-11 subunit (363 aa).

The 338-residue stretch at 26-363 (KMLKILLLGG…KISMEKVGFM (338 aa)) folds into the G-alpha domain. Residues 29–42 (KILLLGGPECGKST) form a G1 motif region. GTP-binding positions include 34–41 (GGPECGKS), 172–178 (LRARVPT), 197–201 (DVGGQ), 276–279 (NKID), and Ala335. Positions 41 and 178 each coordinate Mg(2+). The tract at residues 170-178 (DVLRARVPT) is G2 motif. Residues 193 to 202 (LRMVDVGGQR) are G3 motif. Residues 272-279 (ILFLNKID) form a G4 motif region. Positions 333–338 (TNATDT) are G5 motif.

It belongs to the G-alpha family. In terms of assembly, g proteins are composed of 3 units; alpha, beta and gamma. The alpha chain contains the guanine nucleotide binding site. Expressed in ADL and ASH neurons.

In terms of biological role, guanine nucleotide-binding proteins (G proteins) are involved as modulators or transducers in various transmembrane signaling systems. Mediates the transduction of food and serotonin signals, which modulates the avoidance response to the odorant octanol. Has a role in lifespan to promote longevity. This chain is Guanine nucleotide-binding protein alpha-11 subunit (gpa-11), found in Caenorhabditis elegans.